Consider the following 130-residue polypeptide: Small ribosomal subunit protein uS11 (130 aa).

Belongs to the universal ribosomal protein uS11 family. In terms of assembly, part of the 30S ribosomal subunit. Interacts with proteins S7 and S18. Binds to IF-3.

Its function is as follows. Located on the platform of the 30S subunit, it bridges several disparate RNA helices of the 16S rRNA. Forms part of the Shine-Dalgarno cleft in the 70S ribosome. This is Small ribosomal subunit protein uS11 from Caldicellulosiruptor bescii (strain ATCC BAA-1888 / DSM 6725 / KCTC 15123 / Z-1320) (Anaerocellum thermophilum).